A 320-amino-acid chain; its full sequence is Acetyl-coenzyme A carboxylase carboxyl transferase subunit alpha (320 aa).

Residues Ile42–Asp295 enclose the CoA carboxyltransferase C-terminal domain.

It belongs to the AccA family. As to quaternary structure, acetyl-CoA carboxylase is a heterohexamer composed of biotin carboxyl carrier protein (AccB), biotin carboxylase (AccC) and two subunits each of ACCase subunit alpha (AccA) and ACCase subunit beta (AccD).

The protein resides in the cytoplasm. It carries out the reaction N(6)-carboxybiotinyl-L-lysyl-[protein] + acetyl-CoA = N(6)-biotinyl-L-lysyl-[protein] + malonyl-CoA. Its pathway is lipid metabolism; malonyl-CoA biosynthesis; malonyl-CoA from acetyl-CoA: step 1/1. In terms of biological role, component of the acetyl coenzyme A carboxylase (ACC) complex. First, biotin carboxylase catalyzes the carboxylation of biotin on its carrier protein (BCCP) and then the CO(2) group is transferred by the carboxyltransferase to acetyl-CoA to form malonyl-CoA. This chain is Acetyl-coenzyme A carboxylase carboxyl transferase subunit alpha, found in Rhodopseudomonas palustris (strain BisA53).